Reading from the N-terminus, the 190-residue chain is Threonylcarbamoyl-AMP synthase (190 aa).

In terms of domain architecture, YrdC-like spans 10–190; that stretch reads PQDKESVYRH…DWHSRQVIRA (181 aa).

Belongs to the SUA5 family. TsaC subfamily.

The protein resides in the cytoplasm. The enzyme catalyses L-threonine + hydrogencarbonate + ATP = L-threonylcarbamoyladenylate + diphosphate + H2O. Its function is as follows. Required for the formation of a threonylcarbamoyl group on adenosine at position 37 (t(6)A37) in tRNAs that read codons beginning with adenine. Catalyzes the conversion of L-threonine, HCO(3)(-)/CO(2) and ATP to give threonylcarbamoyl-AMP (TC-AMP) as the acyladenylate intermediate, with the release of diphosphate. The sequence is that of Threonylcarbamoyl-AMP synthase from Dichelobacter nodosus (strain VCS1703A).